The following is a 935-amino-acid chain: LPS-assembly protein LptD (935 aa).

The first 33 residues, 1–33 (MALKSPAFRRKFPLLVTGGLLALQPLATSYVVA), serve as a signal peptide directing secretion. A disordered region spans residues 52-85 (KTPVNNLPPRPVHEGAAVSSGTEAAGEAETADRP). The span at 65–79 (EGAAVSSGTEAAGEA) shows a compositional bias: low complexity.

The protein belongs to the LptD family. In terms of assembly, component of the lipopolysaccharide transport and assembly complex. Interacts with LptE and LptA.

It localises to the cell outer membrane. Its function is as follows. Together with LptE, is involved in the assembly of lipopolysaccharide (LPS) at the surface of the outer membrane. In Pseudomonas putida (strain ATCC 700007 / DSM 6899 / JCM 31910 / BCRC 17059 / LMG 24140 / F1), this protein is LPS-assembly protein LptD.